The primary structure comprises 95 residues: Large ribosomal subunit protein bL27 (95 aa).

Positions 1–24 are disordered; the sequence is MAHKKGTGSTRNGRDSNSQRLGVK. Residues 7–20 are compositionally biased toward polar residues; sequence TGSTRNGRDSNSQR.

It belongs to the bacterial ribosomal protein bL27 family.

This chain is Large ribosomal subunit protein bL27, found in Trichodesmium erythraeum (strain IMS101).